We begin with the raw amino-acid sequence, 281 residues long: 2-dehydro-3-deoxyphosphooctonate aldolase (281 aa).

Belongs to the KdsA family.

The protein resides in the cytoplasm. It carries out the reaction D-arabinose 5-phosphate + phosphoenolpyruvate + H2O = 3-deoxy-alpha-D-manno-2-octulosonate-8-phosphate + phosphate. It functions in the pathway carbohydrate biosynthesis; 3-deoxy-D-manno-octulosonate biosynthesis; 3-deoxy-D-manno-octulosonate from D-ribulose 5-phosphate: step 2/3. It participates in bacterial outer membrane biogenesis; lipopolysaccharide biosynthesis. The chain is 2-dehydro-3-deoxyphosphooctonate aldolase from Pseudomonas syringae pv. tomato (strain ATCC BAA-871 / DC3000).